The primary structure comprises 772 residues: Elongin-A (772 aa).

The 76-residue stretch at 4–79 (ESALQVVEKL…AQWKKLVPVE (76 aa)) folds into the TFIIS N-terminal domain. Composition is skewed to basic and acidic residues over residues 79–105 (ERNAEPDEQDFEKSNSRKRPRDALQKE) and 136–156 (LSELERPHKVSHGHERRDERK). 2 disordered regions span residues 79–403 (ERNA…FEQP) and 418–466 (KKKK…EKPA). Ser196 is modified (phosphoserine). Composition is skewed to basic and acidic residues over residues 226 to 235 (QERHLGEPHG), 253 to 269 (RPVDAKSDEKASVVSRE), 275 to 308 (LSKEENRRPPSGDNAREKPPSSGVKKEKDREGSS), 321 to 343 (SDNHLKKPKHRDPEKAKLDKSKQ), and 372 to 384 (PEGKVKTNLDRKS). Residues Ser384 and Ser387 each carry the phosphoserine modification. Thr394 carries the phosphothreonine modification. N6-acetyllysine is present on Lys434. Residues 434-443 (KGLKKNDSKS) show a composition bias toward basic and acidic residues. The residue at position 516 (Ser516) is a Phosphoserine. The tract at residues 522–681 (EAGFTGRRMN…PPRDVRRRQE (160 aa)) is activation domain. The BC-box stretch occupies residues 550–559 (TLHQQCIRVL). An F-box domain is found at 566 to 610 (IFEVGGVPYSVLEPVLERCTPDQLYRIEEYNHVLIEETDQLWKVH). The segment at 674 to 732 (RDVRRRQEKFGTGGAAVPEKIKIKPAPYPMGSSHASASSISFNPSPEEPAYDGPSTSSA) is disordered. Positions 705–714 (SSHASASSIS) are enriched in low complexity.

As to quaternary structure, heterotrimer of an A (ELOA, ELOA2 or ELOA3P), ELOB and ELOC subunit. Part of a multisubunit ubiquitin ligase complex consisting of elongin BC complex (ELOB and ELOC), elongin A/ELOA, RBX1 and CUL5. Interacts with ERCC6; the interaction is induced by DNA damaging agents or inhibitors of RNA polymerase II elongation. Interacts (via BC-box) with CUL5.

The protein localises to the nucleus. Its function is as follows. SIII, also known as elongin, is a general transcription elongation factor that increases the RNA polymerase II transcription elongation past template-encoded arresting sites. Subunit A is transcriptionally active and its transcription activity is strongly enhanced by binding to the dimeric complex of the SIII regulatory subunits B and C (elongin BC complex). Functionally, as part of a multisubunit complex composed of elongin BC complex (ELOB and ELOC), elongin A/ELOA, RBX1 and CUL5; polyubiquitinates monoubiquitinated POLR2A. This Homo sapiens (Human) protein is Elongin-A.